Consider the following 200-residue polypeptide: dITP/XTP pyrophosphatase (200 aa).

16 to 21 (SNNDGK) contributes to the substrate binding site. Mg(2+) contacts are provided by Glu-46 and Asp-75. Catalysis depends on Asp-75, which acts as the Proton acceptor. Residues Ser-76, 154–157 (FGYD), Lys-177, and 182–183 (HR) each bind substrate.

The protein belongs to the HAM1 NTPase family. As to quaternary structure, homodimer. Mg(2+) is required as a cofactor.

It carries out the reaction XTP + H2O = XMP + diphosphate + H(+). The enzyme catalyses dITP + H2O = dIMP + diphosphate + H(+). It catalyses the reaction ITP + H2O = IMP + diphosphate + H(+). Pyrophosphatase that catalyzes the hydrolysis of nucleoside triphosphates to their monophosphate derivatives, with a high preference for the non-canonical purine nucleotides XTP (xanthosine triphosphate), dITP (deoxyinosine triphosphate) and ITP. Seems to function as a house-cleaning enzyme that removes non-canonical purine nucleotides from the nucleotide pool, thus preventing their incorporation into DNA/RNA and avoiding chromosomal lesions. The protein is dITP/XTP pyrophosphatase of Prochlorococcus marinus (strain SARG / CCMP1375 / SS120).